The primary structure comprises 385 residues: NADH-quinone oxidoreductase subunit H (385 aa).

Transmembrane regions (helical) follow at residues 14 to 34 (GLKL…LVWL), 80 to 100 (FLYY…FSAI), 130 to 150 (IGVG…TLLM), 172 to 192 (ISYE…YGTF), 219 to 239 (LPNW…SAAF), 280 to 300 (MMIA…IPYV), 325 to 345 (LIHF…FIWV), and 365 to 385 (MLPW…IASL).

It belongs to the complex I subunit 1 family. In terms of assembly, NDH-1 is composed of 14 different subunits. Subunits NuoA, H, J, K, L, M, N constitute the membrane sector of the complex.

Its subcellular location is the cell inner membrane. The catalysed reaction is a quinone + NADH + 5 H(+)(in) = a quinol + NAD(+) + 4 H(+)(out). In terms of biological role, NDH-1 shuttles electrons from NADH, via FMN and iron-sulfur (Fe-S) centers, to quinones in the respiratory chain. The immediate electron acceptor for the enzyme in this species is believed to be ubiquinone. Couples the redox reaction to proton translocation (for every two electrons transferred, four hydrogen ions are translocated across the cytoplasmic membrane), and thus conserves the redox energy in a proton gradient. This subunit may bind ubiquinone. This Bdellovibrio bacteriovorus (strain ATCC 15356 / DSM 50701 / NCIMB 9529 / HD100) protein is NADH-quinone oxidoreductase subunit H.